A 184-amino-acid chain; its full sequence is ATP synthase subunit delta (184 aa).

The protein belongs to the ATPase delta chain family. F-type ATPases have 2 components, F(1) - the catalytic core - and F(0) - the membrane proton channel. F(1) has five subunits: alpha(3), beta(3), gamma(1), delta(1), epsilon(1). CF(0) has four main subunits: a(1), b(1), b'(1) and c(10-14). The alpha and beta chains form an alternating ring which encloses part of the gamma chain. F(1) is attached to F(0) by a central stalk formed by the gamma and epsilon chains, while a peripheral stalk is formed by the delta, b and b' chains.

It localises to the cell inner membrane. Functionally, f(1)F(0) ATP synthase produces ATP from ADP in the presence of a proton or sodium gradient. F-type ATPases consist of two structural domains, F(1) containing the extramembraneous catalytic core and F(0) containing the membrane proton channel, linked together by a central stalk and a peripheral stalk. During catalysis, ATP synthesis in the catalytic domain of F(1) is coupled via a rotary mechanism of the central stalk subunits to proton translocation. In terms of biological role, this protein is part of the stalk that links CF(0) to CF(1). It either transmits conformational changes from CF(0) to CF(1) or is implicated in proton conduction. In Erythrobacter litoralis (strain HTCC2594), this protein is ATP synthase subunit delta.